A 306-amino-acid chain; its full sequence is ATP synthase F(1) complex subunit gamma, mitochondrial (306 aa).

The N-terminal 17 residues, 1-17 (MNSASKLFVVLASPANQ), are a transit peptide targeting the mitochondrion.

It belongs to the ATPase gamma chain family. As to quaternary structure, component of the ATP synthase complex composed at least of ATP5F1A/subunit alpha, ATP5F1B/subunit beta, ATP5MC1/subunit c (homooctomer), MT-ATP6/subunit a, MT-ATP8/subunit 8, ATP5ME/subunit e, ATP5MF/subunit f, ATP5MG/subunit g, ATP5MK/subunit k, ATP5MJ/subunit j, ATP5F1C/subunit gamma, ATP5F1D/subunit delta, ATP5F1E/subunit epsilon, ATP5PF/subunit F6, ATP5PB/subunit b, ATP5PD/subunit d, ATP5PO/subunit OSCP. ATP synthase complex consists of a soluble F(1) head domain (subunits alpha(3) and beta(3)) - the catalytic core - and a membrane F(0) domain - the membrane proton channel (subunits c, a, 8, e, f, g, k and j). These two domains are linked by a central stalk (subunits gamma, delta, and epsilon) rotating inside the F1 region and a stationary peripheral stalk (subunits F6, b, d, and OSCP).

It localises to the mitochondrion inner membrane. Functionally, subunit gamma, of the mitochondrial membrane ATP synthase complex (F(1)F(0) ATP synthase or Complex V) that produces ATP from ADP in the presence of a proton gradient across the membrane which is generated by electron transport complexes of the respiratory chain. ATP synthase complex consist of a soluble F(1) head domain - the catalytic core - and a membrane F(1) domain - the membrane proton channel. These two domains are linked by a central stalk rotating inside the F(1) region and a stationary peripheral stalk. During catalysis, ATP synthesis in the catalytic domain of F(1) is coupled via a rotary mechanism of the central stalk subunits to proton translocation. In vivo, can only synthesize ATP although its ATP hydrolase activity can be activated artificially in vitro. With the central stalk subunit delta, is essential for the biogenesis of F(1) catalytic part of the ATP synthase complex namely in the formation of F1 assembly intermediate. The polypeptide is ATP synthase F(1) complex subunit gamma, mitochondrial (Dictyostelium discoideum (Social amoeba)).